We begin with the raw amino-acid sequence, 159 residues long: Cytochrome c-type biogenesis protein CcmE (159 aa).

The Cytoplasmic portion of the chain corresponds to 1–8; sequence MHPIRKKR. A helical; Signal-anchor for type II membrane protein membrane pass occupies residues 9 to 29; the sequence is LTIVLFLVAGIAIAVGLTTYA. Residues 30–159 lie on the Periplasmic side of the membrane; sequence LRQNINLFYD…VEKAAETTAY (130 aa). Residues H124 and Y128 each contribute to the heme site. The tract at residues 135 to 159 is disordered; it reads EALERSSKGQHKSADVEKAAETTAY. Residues 136–159 are compositionally biased toward basic and acidic residues; sequence ALERSSKGQHKSADVEKAAETTAY.

It belongs to the CcmE/CycJ family.

The protein localises to the cell inner membrane. In terms of biological role, heme chaperone required for the biogenesis of c-type cytochromes. Transiently binds heme delivered by CcmC and transfers the heme to apo-cytochromes in a process facilitated by CcmF and CcmH. The chain is Cytochrome c-type biogenesis protein CcmE from Marinobacter nauticus (strain ATCC 700491 / DSM 11845 / VT8) (Marinobacter aquaeolei).